Here is a 96-residue protein sequence, read N- to C-terminus: Acylphosphatase (96 aa).

Residues 9–96 (CAEIYVSGRV…DTFTDFFIKR (88 aa)) enclose the Acylphosphatase-like domain. Catalysis depends on residues Arg24 and Asn42.

Belongs to the acylphosphatase family.

It carries out the reaction an acyl phosphate + H2O = a carboxylate + phosphate + H(+). This chain is Acylphosphatase (acyP), found in Methanococcoides burtonii (strain DSM 6242 / NBRC 107633 / OCM 468 / ACE-M).